Reading from the N-terminus, the 2504-residue chain is Fatty acid synthase (2504 aa).

An N-acetylmethionine modification is found at Met-1. A Ketosynthase family 3 (KS3) domain is found at 1-406 (MEEVVIAGMS…GSNVHVILQP (406 aa)). Lys-59 carries the N6-acetyllysine modification. Position 63 is a phosphoserine (Ser-63). Lys-70 carries the post-translational modification N6-acetyllysine. Cys-161 acts as the For beta-ketoacyl synthase activity in catalysis. Position 207 is a phosphoserine (Ser-207). Catalysis depends on His-293, which acts as the For beta-ketoacyl synthase activity. N6-acetyllysine is present on Lys-298. The active-site For beta-ketoacyl synthase activity is the His-331. An acyl and malonyl transferases region spans residues 429 to 817 (RTLEAVQDLL…INVNPNALFP (389 aa)). Lys-528 is subject to N6-acetyllysine. Ser-581 serves as the catalytic For malonyltransferase activity. An acyl-CoA contacts are provided by residues 647–648 (DT) and Phe-671. The residue at position 673 (Lys-673) is an N6-acetyllysine. Phosphoserine is present on Ser-725. Arg-773 serves as a coordination point for an acyl-CoA. An N6-acetyllysine modification is found at Lys-790. Residues 844–967 (VPVAEDFPNG…VYLWEDPNSK (124 aa)) form an N-terminal hotdog fold region. Residues 844 to 1104 (VPVAEDFPNG…ISRLQTTATS (261 aa)) form the PKS/mFAS DH domain. His-878 acts as the Proton acceptor; for dehydratase activity in catalysis. The tract at residues 982–1104 (SVSRLTQGEV…ISRLQTTATS (123 aa)) is C-terminal hotdog fold. N6-acetyllysine is present on Lys-993. Catalysis depends on Asp-1032, which acts as the Proton donor; for dehydratase activity. Residues Lys-1071 and Lys-1276 each carry the N6-acetyllysine modification. At Cys-1464 the chain carries S-nitrosocysteine. Ser-1577 and Ser-1587 each carry phosphoserine. Residues 1628-1856 (DVPSSWTLEE…VQVREEEPEA (229 aa)) are enoyl reductase. Residue 1664–1681 (VLIHSGSGGVGQAAISIA) participates in NADP(+) binding. Residue Lys-1697 is modified to N6-(pyridoxal phosphate)lysine; alternate. Lys-1697 carries the post-translational modification N6-acetyllysine; alternate. 2 positions are modified to N6-acetyllysine: Lys-1764 and Lys-1840. A beta-ketoacyl reductase region spans residues 1857-2111 (VLPGAQPTLI…FVLAEKKAVA (255 aa)). Position 1879-1894 (1879-1894 (SYIITGGLGGFGLELA)) interacts with NADP(+). Lys-1988 carries the N6-acetyllysine modification. Cys-2084 is modified (S-nitrosocysteine). A Carrier domain is found at 2112-2192 (HGDGDTQRDL…EMSSKTDSAT (81 aa)). Ser-2150 bears the O-(pantetheine 4'-phosphoryl)serine; alternate mark. A Phosphoserine; alternate modification is found at Ser-2150. The interval 2181 to 2205 (LQEMSSKTDSATDTTAPKSRSDTSL) is disordered. Positions 2185-2198 (SSKTDSATDTTAPK) are enriched in low complexity. A phosphoserine mark is found at Ser-2190 and Ser-2229. Positions 2201–2504 (SDTSLKQNQL…AEPRVSVREG (304 aa)) are thioesterase. The active-site For thioesterase activity is the Ser-2301. N6-acetyllysine is present on Lys-2384. Lys-2442 is covalently cross-linked (Glycyl lysine isopeptide (Lys-Gly) (interchain with G-Cter in SUMO2)). The active-site For thioesterase activity is the His-2474.

In terms of assembly, homodimer which is arranged in a head to tail fashion. Interacts with CEACAM1; this interaction is insulin and phosphorylation-dependent; reduces fatty-acid synthase activity. In terms of processing, S-nitrosylation of Fatty acid synthase at cysteine residues Cys-1464 or Cys-2084 is important for the enzyme dimerization. In adipocytes, S-nitrosylation of Fatty acid synthase occurs under physiological conditions and gradually increases during adipogenesis.

Its subcellular location is the cytoplasm. It is found in the melanosome. The catalysed reaction is acetyl-CoA + n malonyl-CoA + 2n NADPH + 2n H(+) = a long-chain fatty acid + (n+1) CoA + n CO2 + 2n NADP(+).. The enzyme catalyses holo-[ACP] + acetyl-CoA = acetyl-[ACP] + CoA. It carries out the reaction holo-[ACP] + malonyl-CoA = malonyl-[ACP] + CoA. It catalyses the reaction a fatty acyl-[ACP] + malonyl-[ACP] + H(+) = a 3-oxoacyl-[ACP] + holo-[ACP] + CO2. The catalysed reaction is a (3R)-hydroxyacyl-[ACP] + NADP(+) = a 3-oxoacyl-[ACP] + NADPH + H(+). The enzyme catalyses a (3R)-hydroxyacyl-[ACP] = a (2E)-enoyl-[ACP] + H2O. It carries out the reaction a 2,3-saturated acyl-[ACP] + NADP(+) = a (2E)-enoyl-[ACP] + NADPH + H(+). It catalyses the reaction hexadecanoyl-[ACP] + H2O = hexadecanoate + holo-[ACP] + H(+). The catalysed reaction is acetyl-[ACP] + malonyl-[ACP] + H(+) = 3-oxobutanoyl-[ACP] + holo-[ACP] + CO2. The enzyme catalyses 3-oxobutanoyl-[ACP] + NADPH + H(+) = (3R)-hydroxybutanoyl-[ACP] + NADP(+). It carries out the reaction (3R)-hydroxybutanoyl-[ACP] = (2E)-butenoyl-[ACP] + H2O. It catalyses the reaction (2E)-butenoyl-[ACP] + NADPH + H(+) = butanoyl-[ACP] + NADP(+). The catalysed reaction is butanoyl-[ACP] + malonyl-[ACP] + H(+) = 3-oxohexanoyl-[ACP] + holo-[ACP] + CO2. The enzyme catalyses 3-oxohexanoyl-[ACP] + NADPH + H(+) = (3R)-hydroxyhexanoyl-[ACP] + NADP(+). It carries out the reaction (3R)-hydroxyhexanoyl-[ACP] = (2E)-hexenoyl-[ACP] + H2O. It catalyses the reaction (2E)-hexenoyl-[ACP] + NADPH + H(+) = hexanoyl-[ACP] + NADP(+). The catalysed reaction is hexanoyl-[ACP] + malonyl-[ACP] + H(+) = 3-oxooctanoyl-[ACP] + holo-[ACP] + CO2. The enzyme catalyses 3-oxooctanoyl-[ACP] + NADPH + H(+) = (3R)-hydroxyoctanoyl-[ACP] + NADP(+). It carries out the reaction (3R)-hydroxyoctanoyl-[ACP] = (2E)-octenoyl-[ACP] + H2O. It catalyses the reaction (2E)-octenoyl-[ACP] + NADPH + H(+) = octanoyl-[ACP] + NADP(+). The catalysed reaction is octanoyl-[ACP] + malonyl-[ACP] + H(+) = 3-oxodecanoyl-[ACP] + holo-[ACP] + CO2. The enzyme catalyses 3-oxodecanoyl-[ACP] + NADPH + H(+) = (3R)-hydroxydecanoyl-[ACP] + NADP(+). It carries out the reaction (3R)-hydroxydecanoyl-[ACP] = (2E)-decenoyl-[ACP] + H2O. It catalyses the reaction (2E)-decenoyl-[ACP] + NADPH + H(+) = decanoyl-[ACP] + NADP(+). The catalysed reaction is decanoyl-[ACP] + malonyl-[ACP] + H(+) = 3-oxododecanoyl-[ACP] + holo-[ACP] + CO2. The enzyme catalyses 3-oxododecanoyl-[ACP] + NADPH + H(+) = (3R)-hydroxydodecanoyl-[ACP] + NADP(+). It carries out the reaction (3R)-hydroxydodecanoyl-[ACP] = (2E)-dodecenoyl-[ACP] + H2O. It catalyses the reaction (2E)-dodecenoyl-[ACP] + NADPH + H(+) = dodecanoyl-[ACP] + NADP(+). The catalysed reaction is dodecanoyl-[ACP] + malonyl-[ACP] + H(+) = 3-oxotetradecanoyl-[ACP] + holo-[ACP] + CO2. The enzyme catalyses 3-oxotetradecanoyl-[ACP] + NADPH + H(+) = (3R)-hydroxytetradecanoyl-[ACP] + NADP(+). It carries out the reaction (3R)-hydroxytetradecanoyl-[ACP] = (2E)-tetradecenoyl-[ACP] + H2O. It catalyses the reaction (2E)-tetradecenoyl-[ACP] + NADPH + H(+) = tetradecanoyl-[ACP] + NADP(+). The catalysed reaction is tetradecanoyl-[ACP] + malonyl-[ACP] + H(+) = 3-oxohexadecanoyl-[ACP] + holo-[ACP] + CO2. The enzyme catalyses 3-oxohexadecanoyl-[ACP] + NADPH + H(+) = (3R)-hydroxyhexadecanoyl-[ACP] + NADP(+). It carries out the reaction (3R)-hydroxyhexadecanoyl-[ACP] = (2E)-hexadecenoyl-[ACP] + H2O. It catalyses the reaction (2E)-hexadecenoyl-[ACP] + NADPH + H(+) = hexadecanoyl-[ACP] + NADP(+). The catalysed reaction is hexadecanoyl-[ACP] + malonyl-[ACP] + H(+) = 3-oxooctadecanoyl-[ACP] + holo-[ACP] + CO2. The enzyme catalyses 3-oxooctadecanoyl-[ACP] + NADPH + H(+) = (3R)-hydroxyoctadecanoyl-[ACP] + NADP(+). It carries out the reaction (3R)-hydroxyoctadecanoyl-[ACP] = (2E)-octadecenoyl-[ACP] + H2O. It catalyses the reaction (2E)-octadecenoyl-[ACP] + NADPH + H(+) = octadecanoyl-[ACP] + NADP(+). The catalysed reaction is tetradecanoyl-[ACP] + H2O = tetradecanoate + holo-[ACP] + H(+). It participates in lipid metabolism; fatty acid biosynthesis. Fatty acid synthetase is a multifunctional enzyme that catalyzes the de novo biosynthesis of long-chain saturated fatty acids starting from acetyl-CoA and malonyl-CoA in the presence of NADPH. This multifunctional protein contains 7 catalytic activities and a site for the binding of the prosthetic group 4'-phosphopantetheine of the acyl carrier protein ([ACP]) domain. This Mus musculus (Mouse) protein is Fatty acid synthase (Fasn).